Reading from the N-terminus, the 439-residue chain is Probable aspartic-type endopeptidase AFUA_3G01220 (439 aa).

A signal peptide spans 1 to 20 (MHFSIGSLFLYLIASASCTA). Residues 31 to 50 (RTPFTTSTSKPSAFTNPSTD) form a disordered region. Positions 32 to 45 (TPFTTSTSKPSAFT) are enriched in low complexity. Residues 95-436 (FATSINIGNQ…DVGAAEMRFA (342 aa)) form the Peptidase A1 domain. N-linked (GlcNAc...) asparagine glycosylation occurs at Asn-103. Asp-111 is a catalytic residue. 7 N-linked (GlcNAc...) asparagine glycosylation sites follow: Asn-149, Asn-178, Asn-187, Asn-253, Asn-256, Asn-276, and Asn-308. Asp-323 is an active-site residue. N-linked (GlcNAc...) asparagine glycosylation is found at Asn-361 and Asn-394.

The protein belongs to the peptidase A1 family.

The protein resides in the secreted. Probable aspartic-type endopeptidase which contributes to virulence. The chain is Probable aspartic-type endopeptidase AFUA_3G01220 from Aspergillus fumigatus (strain ATCC MYA-4609 / CBS 101355 / FGSC A1100 / Af293) (Neosartorya fumigata).